The sequence spans 310 residues: Thioredoxin reductase (310 aa).

Residue 34 to 41 (NGMQPGGQ) participates in FAD binding. Cysteines 135 and 138 form a disulfide. FAD is bound at residue 281-290 (DVQDKIYRQA).

Belongs to the class-II pyridine nucleotide-disulfide oxidoreductase family. Homodimer. FAD is required as a cofactor.

It localises to the cytoplasm. The enzyme catalyses [thioredoxin]-dithiol + NADP(+) = [thioredoxin]-disulfide + NADPH + H(+). This chain is Thioredoxin reductase (trxB), found in Rickettsia felis (strain ATCC VR-1525 / URRWXCal2) (Rickettsia azadi).